A 157-amino-acid chain; its full sequence is Small ribosomal subunit protein uS7 (157 aa).

It belongs to the universal ribosomal protein uS7 family. Part of the 30S ribosomal subunit. Contacts proteins S9 and S11.

Functionally, one of the primary rRNA binding proteins, it binds directly to 16S rRNA where it nucleates assembly of the head domain of the 30S subunit. Is located at the subunit interface close to the decoding center, probably blocks exit of the E-site tRNA. The polypeptide is Small ribosomal subunit protein uS7 (Chloroflexus aurantiacus (strain ATCC 29366 / DSM 635 / J-10-fl)).